Consider the following 425-residue polypeptide: Histidine--tRNA ligase (425 aa).

It belongs to the class-II aminoacyl-tRNA synthetase family. In terms of assembly, homodimer.

It localises to the cytoplasm. The catalysed reaction is tRNA(His) + L-histidine + ATP = L-histidyl-tRNA(His) + AMP + diphosphate + H(+). The chain is Histidine--tRNA ligase from Shewanella sp. (strain MR-4).